The sequence spans 469 residues: Sorting and assembly machinery component 50 homolog (469 aa).

The tract at residues Met-1–Gly-20 is disordered. The region spanning Val-45–Leu-125 is the POTRA domain. Lys-255 bears the N6-methyllysine mark.

The protein belongs to the SAM50/omp85 family. As to quaternary structure, associates with the mitochondrial contact site and cristae organizing system (MICOS) complex, composed of at least MICOS10/MIC10, CHCHD3/MIC19, CHCHD6/MIC25, APOOL/MIC27, IMMT/MIC60, APOO/MIC23/MIC26 and QIL1/MIC13. This complex was also known under the names MINOS or MitOS complex. The MICOS complex associates with mitochondrial outer membrane proteins SAMM50, MTX1 and MTX2 (together described as components of the mitochondrial outer membrane sorting assembly machinery (SAM) complex) and DNAJC11, mitochondrial inner membrane protein TMEM11 and with HSPA9. The MICOS and SAM complexes together with DNAJC11 are part of a large protein complex spanning both membranes termed the mitochondrial intermembrane space bridging (MIB) complex. Interacts with CHCHD3/MIC19. Interacts with ARMC1. In terms of assembly, (Microbial infection) Interacts with parasite T.gondii RH strain MAF1b1; the interaction is probably indirect and results in the disruption of the MIB complex and the formation of SPOTs (structures positive for outer mitochondrial membrane (OMM)), a cellular response to OMM stress, which leads to the constitutive shedding of OMM vesicles.

It localises to the mitochondrion outer membrane. Its subcellular location is the cytoplasm. The protein localises to the mitochondrion. Its function is as follows. Plays a crucial role in the maintenance of the structure of mitochondrial cristae and the proper assembly of the mitochondrial respiratory chain complexes. Required for the assembly of TOMM40 into the TOM complex. The chain is Sorting and assembly machinery component 50 homolog (SAMM50) from Homo sapiens (Human).